The primary structure comprises 163 residues: Staphylokinase (163 aa).

An N-terminal signal peptide occupies residues 1 to 27 (MLKRSLLFLTVLLLLFSFSSITNEVSA).

The protein belongs to the staphylokinase family.

The protein resides in the secreted. Its function is as follows. Potent plasminogen activator that converts plasminogen into plasmin. It forms a 1:1 complex with plasmin, which in turn activates other plasminogen molecules. The protein is Staphylokinase of Staphylococcus phage S phi-C (Bacteriophage S phi-C).